The sequence spans 80 residues: Large ribosomal subunit protein uL29 (80 aa).

The protein belongs to the universal ribosomal protein uL29 family.

The sequence is that of Large ribosomal subunit protein uL29 from Mycobacterium marinum (strain ATCC BAA-535 / M).